The chain runs to 188 residues: Shikimate kinase (188 aa).

21–26 (GAGKTT) is a binding site for ATP. Thr-25 is a Mg(2+) binding site. The substrate site is built by Asp-43, Arg-67, and Gly-90. Residue Arg-130 coordinates ATP. Arg-148 contributes to the substrate binding site.

The protein belongs to the shikimate kinase family. In terms of assembly, monomer. It depends on Mg(2+) as a cofactor.

It is found in the cytoplasm. It carries out the reaction shikimate + ATP = 3-phosphoshikimate + ADP + H(+). Its pathway is metabolic intermediate biosynthesis; chorismate biosynthesis; chorismate from D-erythrose 4-phosphate and phosphoenolpyruvate: step 5/7. In terms of biological role, catalyzes the specific phosphorylation of the 3-hydroxyl group of shikimic acid using ATP as a cosubstrate. The chain is Shikimate kinase from Geobacillus kaustophilus (strain HTA426).